A 313-amino-acid polypeptide reads, in one-letter code: Formimidoylglutamase (313 aa).

Residues His-130, Asp-155, His-157, Asp-159, Asp-241, and Asp-243 each contribute to the Mn(2+) site.

It belongs to the arginase family. Requires Mn(2+) as cofactor.

It catalyses the reaction N-formimidoyl-L-glutamate + H2O = formamide + L-glutamate. The protein operates within amino-acid degradation; L-histidine degradation into L-glutamate; L-glutamate from N-formimidoyl-L-glutamate (hydrolase route): step 1/1. Functionally, catalyzes the conversion of N-formimidoyl-L-glutamate to L-glutamate and formamide. This chain is Formimidoylglutamase, found in Salmonella schwarzengrund (strain CVM19633).